Reading from the N-terminus, the 88-residue chain is MAHKKAGGSSRNGRDSAGRRLGVKKFGSEAVIPGNIIVRQRGTKWHPGTNVGMGKDHTLFALVPGKVQFETRRGREFVTVVPLAQAAE.

The interval 1–23 (MAHKKAGGSSRNGRDSAGRRLGV) is disordered.

It belongs to the bacterial ribosomal protein bL27 family.

This Methylorubrum populi (strain ATCC BAA-705 / NCIMB 13946 / BJ001) (Methylobacterium populi) protein is Large ribosomal subunit protein bL27.